Here is a 292-residue protein sequence, read N- to C-terminus: Protease HtpX (292 aa).

A run of 2 helical transmembrane segments spans residues Val-5–Val-25 and Ser-34–Leu-54. His-140 lines the Zn(2+) pocket. Glu-141 is an active-site residue. Residue His-144 coordinates Zn(2+). 2 consecutive transmembrane segments (helical) span residues Leu-155–Ile-175 and Ile-193–Phe-213. Glu-218 contacts Zn(2+).

Belongs to the peptidase M48B family. Zn(2+) serves as cofactor.

The protein resides in the cell inner membrane. The polypeptide is Protease HtpX (Xanthomonas campestris pv. campestris (strain B100)).